Reading from the N-terminus, the 451-residue chain is Exodeoxyribonuclease 7 large subunit (451 aa).

This sequence belongs to the XseA family. As to quaternary structure, heterooligomer composed of large and small subunits.

It is found in the cytoplasm. It carries out the reaction Exonucleolytic cleavage in either 5'- to 3'- or 3'- to 5'-direction to yield nucleoside 5'-phosphates.. Bidirectionally degrades single-stranded DNA into large acid-insoluble oligonucleotides, which are then degraded further into small acid-soluble oligonucleotides. The chain is Exodeoxyribonuclease 7 large subunit from Neisseria meningitidis serogroup A / serotype 4A (strain DSM 15465 / Z2491).